The primary structure comprises 78 residues: Acyl carrier protein (78 aa).

Residues 1 to 75 (MIKEKILSIV…DLISVVKNST (75 aa)) enclose the Carrier domain. Residue Ser-35 is modified to O-(pantetheine 4'-phosphoryl)serine.

The protein belongs to the acyl carrier protein (ACP) family. Post-translationally, 4'-phosphopantetheine is transferred from CoA to a specific serine of apo-ACP by AcpS. This modification is essential for activity because fatty acids are bound in thioester linkage to the sulfhydryl of the prosthetic group.

It localises to the cytoplasm. The protein operates within lipid metabolism; fatty acid biosynthesis. In terms of biological role, carrier of the growing fatty acid chain in fatty acid biosynthesis. The sequence is that of Acyl carrier protein (acpP) from Shigella flexneri.